The sequence spans 145 residues: Large ribosomal subunit protein uL16 (145 aa).

The span at 76–95 shows a compositional bias: basic and acidic residues; that stretch reads PKTKTPAETRMGKGKGEPEH. The disordered stretch occupies residues 76 to 97; that stretch reads PKTKTPAETRMGKGKGEPEHFV.

It belongs to the universal ribosomal protein uL16 family. As to quaternary structure, part of the 50S ribosomal subunit.

Functionally, binds 23S rRNA and is also seen to make contacts with the A and possibly P site tRNAs. The chain is Large ribosomal subunit protein uL16 from Salinibacter ruber (strain DSM 13855 / M31).